A 557-amino-acid polypeptide reads, in one-letter code: Formate--tetrahydrofolate ligase (557 aa).

66–73 (TPAGEGKT) provides a ligand contact to ATP.

Belongs to the formate--tetrahydrofolate ligase family.

It catalyses the reaction (6S)-5,6,7,8-tetrahydrofolate + formate + ATP = (6R)-10-formyltetrahydrofolate + ADP + phosphate. It functions in the pathway one-carbon metabolism; tetrahydrofolate interconversion. The protein is Formate--tetrahydrofolate ligase of Bartonella tribocorum (strain CIP 105476 / IBS 506).